A 343-amino-acid polypeptide reads, in one-letter code: Methionine import ATP-binding protein MetN 2 (343 aa).

Positions 2 to 241 constitute an ABC transporter domain; that stretch reads IEFKDVTKTF…PQQAVTKRFV (240 aa). 38–45 is a binding site for ATP; sequence GYSGAGKS.

Belongs to the ABC transporter superfamily. Methionine importer (TC 3.A.1.24) family. In terms of assembly, the complex is composed of two ATP-binding proteins (MetN), two transmembrane proteins (MetI) and a solute-binding protein (MetQ).

The protein localises to the cell membrane. It carries out the reaction L-methionine(out) + ATP + H2O = L-methionine(in) + ADP + phosphate + H(+). The catalysed reaction is D-methionine(out) + ATP + H2O = D-methionine(in) + ADP + phosphate + H(+). Part of the ABC transporter complex MetNIQ involved in methionine import. Responsible for energy coupling to the transport system. The sequence is that of Methionine import ATP-binding protein MetN 2 from Lactiplantibacillus plantarum (strain ATCC BAA-793 / NCIMB 8826 / WCFS1) (Lactobacillus plantarum).